The primary structure comprises 1328 residues: Tubulin polyglutamylase TTLL5 (1328 aa).

The interval 1–22 (MPVVMARDLEETASSSEDEDLA) is disordered. The TTL domain maps to 62 to 407 (RYHLSYKIVR…VCQDPAQRTS (346 aa)). ATP is bound by residues K180, 186 to 187 (RG), 208 to 211 (SRYI), and 221 to 223 (KFD). Residue R186 participates in a protein binding. An L-glutamate-binding site is contributed by R247. 268 to 269 (TN) contributes to the ATP binding site. L-glutamate-binding residues include Y270, S271, and K293. Residues D353, E366, and N368 each contribute to the Mg(2+) site. The tract at residues 378-488 (PLDLKIKASM…RGGFIRIFPT (111 aa)) is c-MTBD region. K384 provides a ligand contact to L-glutamate. Disordered regions lie at residues 411-436 (IYPSFESSRRNPFQKPQRTRPLSASD), 585-631 (AQPA…QAKY), 834-853 (HSKSSKNSSSYSDSGAKGDH), 948-975 (PALLLSPVPDNAPPSIHSGTQNVSPAGL), 1006-1032 (SSAKAAGSCHPHKHHSGIAKTQKEGED), 1085-1129 (RSSA…LQTG), and 1212-1271 (RISS…QLNG). Positions 420 to 432 (RNPFQKPQRTRPL) are enriched in polar residues. A compositionally biased stretch (acidic residues) spans 597 to 617 (ESEEEEEVGLDNDDEEQEASQ). A compositionally biased stretch (low complexity) spans 838 to 847 (SKNSSSYSDS). Polar residues-rich tracts occupy residues 1116-1128 (THSSPPGSRSLQT), 1214-1227 (SSATTGGQKPNTLP), 1234-1248 (PNSSTLVSKPASNHK), and 1257-1271 (QRASKGSSAEGQLNG).

Belongs to the tubulin--tyrosine ligase family. Interacts with the transcriptional coactivators NCOA1/SRC-1 and NCOA2/TIF2. Mg(2+) serves as cofactor. As to expression, highly expressed in brain, kidney, liver, spleen and testis. Expressed in heart, lung, muscle and trachea.

It localises to the cell projection. Its subcellular location is the cilium. The protein resides in the cytoplasm. It is found in the cytoskeleton. The protein localises to the cilium basal body. It localises to the nucleus. It catalyses the reaction L-glutamyl-[protein] + L-glutamate + ATP = gamma-L-glutamyl-L-glutamyl-[protein] + ADP + phosphate + H(+). The catalysed reaction is (L-glutamyl)(n)-gamma-L-glutamyl-L-glutamyl-[protein] + L-glutamate + ATP = (L-glutamyl)(n+1)-gamma-L-glutamyl-L-glutamyl-[protein] + ADP + phosphate + H(+). Functionally, polyglutamylase which modifies tubulin, generating polyglutamate side chains on the gamma-carboxyl group of specific glutamate residues within the C-terminal tail of tubulin. Preferentially mediates ATP-dependent initiation step of the polyglutamylation reaction over the elongation step. Preferentially modifies the alpha-tubulin tail over a beta-tail. Required for CCSAP localization to both polyglutamylated spindle and cilia microtubules. Increases the effects of transcriptional coactivator NCOA2/TIF2 in glucocorticoid receptor-mediated repression and induction and in androgen receptor-mediated induction. The polypeptide is Tubulin polyglutamylase TTLL5 (Mus musculus (Mouse)).